Consider the following 131-residue polypeptide: Small ribosomal subunit protein uS8 (131 aa).

This sequence belongs to the universal ribosomal protein uS8 family. In terms of assembly, part of the 30S ribosomal subunit. Contacts proteins S5 and S12.

Its function is as follows. One of the primary rRNA binding proteins, it binds directly to 16S rRNA central domain where it helps coordinate assembly of the platform of the 30S subunit. The polypeptide is Small ribosomal subunit protein uS8 (Pelagibacter ubique (strain HTCC1062)).